A 428-amino-acid polypeptide reads, in one-letter code: Gamma-glutamyl phosphate reductase (428 aa).

Belongs to the gamma-glutamyl phosphate reductase family.

The protein localises to the cytoplasm. It carries out the reaction L-glutamate 5-semialdehyde + phosphate + NADP(+) = L-glutamyl 5-phosphate + NADPH + H(+). It functions in the pathway amino-acid biosynthesis; L-proline biosynthesis; L-glutamate 5-semialdehyde from L-glutamate: step 2/2. Catalyzes the NADPH-dependent reduction of L-glutamate 5-phosphate into L-glutamate 5-semialdehyde and phosphate. The product spontaneously undergoes cyclization to form 1-pyrroline-5-carboxylate. This Agrobacterium fabrum (strain C58 / ATCC 33970) (Agrobacterium tumefaciens (strain C58)) protein is Gamma-glutamyl phosphate reductase.